The chain runs to 460 residues: tRNA modification GTPase MnmE (460 aa).

R29, E91, and K132 together coordinate (6S)-5-formyl-5,6,7,8-tetrahydrofolate. The TrmE-type G domain occupies 227-383 (GISIALIGKT…LIDTIIKKCG (157 aa)). N237 provides a ligand contact to K(+). Residues 237-242 (NVGKSS), 256-262 (TNIPGTT), and 281-284 (DTAG) contribute to the GTP site. S241 contributes to the Mg(2+) binding site. 3 residues coordinate K(+): T256, I258, and T261. T262 lines the Mg(2+) pocket. K460 serves as a coordination point for (6S)-5-formyl-5,6,7,8-tetrahydrofolate.

This sequence belongs to the TRAFAC class TrmE-Era-EngA-EngB-Septin-like GTPase superfamily. TrmE GTPase family. In terms of assembly, homodimer. Heterotetramer of two MnmE and two MnmG subunits. Requires K(+) as cofactor.

The protein resides in the cytoplasm. In terms of biological role, exhibits a very high intrinsic GTPase hydrolysis rate. Involved in the addition of a carboxymethylaminomethyl (cmnm) group at the wobble position (U34) of certain tRNAs, forming tRNA-cmnm(5)s(2)U34. The sequence is that of tRNA modification GTPase MnmE from Prochlorococcus marinus (strain AS9601).